A 107-amino-acid polypeptide reads, in one-letter code: Nucleoid-associated protein CE0210 (107 aa).

Belongs to the YbaB/EbfC family. In terms of assembly, homodimer.

It is found in the cytoplasm. It localises to the nucleoid. In terms of biological role, binds to DNA and alters its conformation. May be involved in regulation of gene expression, nucleoid organization and DNA protection. This Corynebacterium efficiens (strain DSM 44549 / YS-314 / AJ 12310 / JCM 11189 / NBRC 100395) protein is Nucleoid-associated protein CE0210.